Consider the following 161-residue polypeptide: MRILGIDPGTRITGYGLIEKIGNRLLHVDNGAIYTRTDAPLADRLKTIYDGLSRVIADYAPTGVAVERIFVAKNALSALKLGHARGVAMLAGVNASLPVAEYTAVEVKQAVVGYGRAAKPQVQQMVRVLLNLPEIAQEDASDALAVAICHAHCFHLNDLLT.

Catalysis depends on residues Asp7, Glu67, and Asp139. Asp7, Glu67, and Asp139 together coordinate Mg(2+).

Belongs to the RuvC family. As to quaternary structure, homodimer which binds Holliday junction (HJ) DNA. The HJ becomes 2-fold symmetrical on binding to RuvC with unstacked arms; it has a different conformation from HJ DNA in complex with RuvA. In the full resolvosome a probable DNA-RuvA(4)-RuvB(12)-RuvC(2) complex forms which resolves the HJ. Requires Mg(2+) as cofactor.

It localises to the cytoplasm. The enzyme catalyses Endonucleolytic cleavage at a junction such as a reciprocal single-stranded crossover between two homologous DNA duplexes (Holliday junction).. Functionally, the RuvA-RuvB-RuvC complex processes Holliday junction (HJ) DNA during genetic recombination and DNA repair. Endonuclease that resolves HJ intermediates. Cleaves cruciform DNA by making single-stranded nicks across the HJ at symmetrical positions within the homologous arms, yielding a 5'-phosphate and a 3'-hydroxyl group; requires a central core of homology in the junction. The consensus cleavage sequence is 5'-(A/T)TT(C/G)-3'. Cleavage occurs on the 3'-side of the TT dinucleotide at the point of strand exchange. HJ branch migration catalyzed by RuvA-RuvB allows RuvC to scan DNA until it finds its consensus sequence, where it cleaves and resolves the cruciform DNA. In Syntrophotalea carbinolica (strain DSM 2380 / NBRC 103641 / GraBd1) (Pelobacter carbinolicus), this protein is Crossover junction endodeoxyribonuclease RuvC.